We begin with the raw amino-acid sequence, 370 residues long: Chaperone protein DnaJ (370 aa).

Residues 5 to 70 form the J domain; it reads DYYEVLGVSK…EKRSMYDRMG (66 aa). The CR-type zinc-finger motif lies at 134-212; it reads GVKKTITFTA…CHGSGVADRQ (79 aa). The Zn(2+) site is built by cysteine 147, cysteine 150, cysteine 164, cysteine 167, cysteine 186, cysteine 189, cysteine 200, and cysteine 203. 4 CXXCXGXG motif repeats span residues 147–154, 164–171, 186–193, and 200–207; these read CDVCDGKG, CKTCHGSG, CGTCRGQG, and CHACHGSG. Positions 351-370 are disordered; the sequence is DGEDSASSPKKKSFFDRLFD.

This sequence belongs to the DnaJ family. As to quaternary structure, homodimer. Zn(2+) is required as a cofactor.

It is found in the cytoplasm. Functionally, participates actively in the response to hyperosmotic and heat shock by preventing the aggregation of stress-denatured proteins and by disaggregating proteins, also in an autonomous, DnaK-independent fashion. Unfolded proteins bind initially to DnaJ; upon interaction with the DnaJ-bound protein, DnaK hydrolyzes its bound ATP, resulting in the formation of a stable complex. GrpE releases ADP from DnaK; ATP binding to DnaK triggers the release of the substrate protein, thus completing the reaction cycle. Several rounds of ATP-dependent interactions between DnaJ, DnaK and GrpE are required for fully efficient folding. Also involved, together with DnaK and GrpE, in the DNA replication of plasmids through activation of initiation proteins. In Acinetobacter baumannii (strain AB0057), this protein is Chaperone protein DnaJ.